A 254-amino-acid polypeptide reads, in one-letter code: Proteasome subunit alpha (254 aa).

The interval 234–254 is disordered; sequence EEMLPTPAATEDAPANGDAPS.

It belongs to the peptidase T1A family. The 20S proteasome core is composed of 14 alpha and 14 beta subunits that assemble into four stacked heptameric rings, resulting in a barrel-shaped structure. The two inner rings, each composed of seven catalytic beta subunits, are sandwiched by two outer rings, each composed of seven alpha subunits. The catalytic chamber with the active sites is on the inside of the barrel. Has a gated structure, the ends of the cylinder being occluded by the N-termini of the alpha-subunits. Is capped by the proteasome-associated ATPase, ARC.

The protein resides in the cytoplasm. It participates in protein degradation; proteasomal Pup-dependent pathway. The formation of the proteasomal ATPase ARC-20S proteasome complex, likely via the docking of the C-termini of ARC into the intersubunit pockets in the alpha-rings, may trigger opening of the gate for substrate entry. Interconversion between the open-gate and close-gate conformations leads to a dynamic regulation of the 20S proteasome proteolysis activity. Component of the proteasome core, a large protease complex with broad specificity involved in protein degradation. The sequence is that of Proteasome subunit alpha from Rhodococcus erythropolis (strain PR4 / NBRC 100887).